An 800-amino-acid chain; its full sequence is MAVRELCFPRQRQVLFLFLFWGVSLAGSGFGRYSVTEETEKGSFVVNLAKDLGLAEGELAARGTRVVSDDNKQYLLLDSHTGNLLTNEKLDREKLCGPKEPCMLYFQILMDDPFQIYRAELRVRDINDHAPVFQDKETVLKISENTAEGTAFRLERAQDPDGGLNGIQNYTISPNSFFHINISGGDEGMIYPELVLDKALDREEQGELSLTLTALDGGSPSRSGTSTVRIVVLDVNDNAPQFAQALYETQAPENSPIGFLIVKVWAEDVDSGVNAEVSYSFFDASENIRTTFQINPFSGEIFLRELLDYELVNSYKINIQAMDGGGLSARCRVLVEVLDTNDNPPELIVSSFSNSVAENSPETPLAVFKINDRDSGENGKMVCYIQENLPFLLKPSVENFYILITEGALDREIRAEYNITITVTDLGTPRLKTEHNITVLVSDVNDNAPAFTQTSYTLFVRENNSPALHIGSVSATDRDSGTNAQVTYSLLPPQDPHLPLASLVSINADNGHLFALRSLDYEALQAFEFRVGATDRGSPALSREALVRVLVLDANDNSPFVLYPLQNGSAPCTELVPRAAEPGYLVTKVVAVDGDSGQNAWLSYQLLKATEPGLFGVWAHNGEVRTARLLSERDAAKHRLVVLVKDNGEPPRSATATLHLLLVDGFSQPYLPLPEAAPAQAQAEADLLTVYLVVALASVSSLFLLSVLLFVAVRLCRRSRAASVGRCSVPEGPFPGHLVDVRGAETLSQSYQYEVCLTGGPGTSEFKFLKPVISDIQAQGPGRKGEENSTFRNSFGFNIQ.

An N-terminal signal peptide occupies residues 1–26 (MAVRELCFPRQRQVLFLFLFWGVSLA). At 27–692 (GSGFGRYSVT…AEADLLTVYL (666 aa)) the chain is on the extracellular side. Cadherin domains are found at residues 35-133 (VTEE…APVF), 138-242 (TVLK…APQF), 247-347 (YETQ…PPEL), 352-451 (FSNS…APAF), and 456-561 (YTLF…SPFV). N-linked (GlcNAc...) asparagine glycosylation is found at N169 and N181. 2 N-linked (GlcNAc...) asparagine glycosylation sites follow: N418 and N436. An N-linked (GlcNAc...) asparagine glycan is attached at N567. The Cadherin 6 domain occupies 568 to 671 (GSAPCTELVP…LVDGFSQPYL (104 aa)). Residues 693 to 713 (VVALASVSSLFLLSVLLFVAV) form a helical membrane-spanning segment. The Cytoplasmic portion of the chain corresponds to 714 to 800 (RLCRRSRAAS…FRNSFGFNIQ (87 aa)).

It is found in the cell membrane. Its function is as follows. Potential calcium-dependent cell-adhesion protein. May be involved in the establishment and maintenance of specific neuronal connections in the brain. The sequence is that of Protocadherin beta-10 (PCDHB10) from Homo sapiens (Human).